A 70-amino-acid chain; its full sequence is Small ribosomal subunit protein bS21B (70 aa).

This sequence belongs to the bacterial ribosomal protein bS21 family.

In Rhizobium etli (strain ATCC 51251 / DSM 11541 / JCM 21823 / NBRC 15573 / CFN 42), this protein is Small ribosomal subunit protein bS21B.